Reading from the N-terminus, the 300-residue chain is F-box/LRR-repeat protein 15 (300 aa).

Met-1 is subject to N-acetylmethionine. The 48-residue stretch at 19 to 66 (LLDLPWEDVLLPHVLNWVPLRQLLRLQRVSRAFRALVQLHLARLRRFD) folds into the F-box domain. Residues 113–269 (NPQLRSVALA…EPSLSRLRKR (157 aa)) are interaction with SMURF1. 5 LRR repeats span residues 141-162 (RLQRLSLAHCDWVDGLALRGLA), 167-188 (ALEELDLTACRQLKDEAIVYLA), 194-215 (GLRSLSLAVNANVGDTAVQELA), 220-241 (QLEHLDLTGCLRVGSDGVRTLA), and 246-267 (ALRSLRVRHCHHVAEPSLSRLR).

Belongs to the FBXL15 family. In terms of assembly, part of the SCF (SKP1-CUL1-F-box) E3 ubiquitin-protein ligase complex SCF(FBXL15) composed of CUL1, SKP1, RBX1 and FBXL15. In terms of tissue distribution, expressed in heart, liver, spleen, bone, muscle, brain and kidney (at protein level).

The protein localises to the cytoplasm. Its pathway is protein modification; protein ubiquitination. Functionally, substrate recognition component of a SCF (SKP1-CUL1-F-box protein) E3 ubiquitin-protein ligase complex which mediates the ubiquitination and subsequent proteasomal degradation of SMURF1, thereby acting as a positive regulator of the BMP signaling pathway. Required for dorsal/ventral pattern formation and bone mass maintenance. Also mediates ubiquitination of SMURF2 and WWP2. The chain is F-box/LRR-repeat protein 15 (Fbxl15) from Mus musculus (Mouse).